A 379-amino-acid polypeptide reads, in one-letter code: Cytokine receptor common subunit gamma (379 aa).

An N-terminal signal peptide occupies residues 1-22 (MLKPPLPLRSLLFLQLPLLGVG). At 23 to 269 (LNPKFLTPSG…ENIENPENPS (247 aa)) the chain is on the extracellular side. Cys68 and Cys78 are joined by a disulfide. N-linked (GlcNAc...) asparagine glycans are attached at residues Asn77, Asn81, and Asn90. The cysteines at positions 109 and 122 are disulfide-linked. The Fibronectin type-III domain occupies 163-260 (APENLTLRNL…IHWGSNTSKE (98 aa)). N-linked (GlcNAc...) asparagine glycans are attached at residues Asn166 and Asn171. A WSXWS motif motif is present at residues 244-248 (WSDWS). A helical membrane pass occupies residues 270-290 (LFALEAVLIPLGSMGLIVSLI). The Cytoplasmic segment spans residues 291–379 (CVYCWLERTM…PPCYTLKPEP (89 aa)). A Box 1 motif motif is present at residues 299 to 307 (TMPRIPTLK). Thr305 carries the phosphothreonine modification. The interval 349 to 370 (PPKGGEGPGGSPCSQHSPYWAP) is disordered.

It belongs to the type I cytokine receptor family. Type 5 subfamily. In terms of assembly, the gamma subunit is common to the IL2, IL4, IL7, IL15, IL21 and probably also the IL13 receptors. Interacts with SHB upon interleukin stimulation.

It is found in the cell membrane. The protein localises to the cell surface. Common subunit for the receptors for a variety of interleukins. Probably in association with IL15RA, involved in the stimulation of neutrophil phagocytosis by IL15. This Bos taurus (Bovine) protein is Cytokine receptor common subunit gamma (IL2RG).